A 232-amino-acid chain; its full sequence is Ornithine carbamoyltransferase (232 aa).

Carbamoyl phosphate contacts are provided by residues Gln15, Arg39, and 66–69; that span reads HPTQ. L-ornithine contacts are provided by residues Asn99, Asp163, and 167–168; that span reads SM. Residues 204 to 207 and Thr232 contribute to the carbamoyl phosphate site; that span reads HCLP.

This sequence belongs to the aspartate/ornithine carbamoyltransferase superfamily. OTCase family.

The protein localises to the cytoplasm. The catalysed reaction is carbamoyl phosphate + L-ornithine = L-citrulline + phosphate + H(+). Its pathway is amino-acid biosynthesis; L-arginine biosynthesis; L-arginine from L-ornithine and carbamoyl phosphate: step 1/3. Functionally, reversibly catalyzes the transfer of the carbamoyl group from carbamoyl phosphate (CP) to the N(epsilon) atom of ornithine (ORN) to produce L-citrulline. In Neisseria sicca, this protein is Ornithine carbamoyltransferase (argF).